A 389-amino-acid polypeptide reads, in one-letter code: Formate-dependent phosphoribosylglycinamide formyltransferase (389 aa).

N(1)-(5-phospho-beta-D-ribosyl)glycinamide is bound by residues 15–16 and glutamate 75; that span reads EL. ATP contacts are provided by residues arginine 107, lysine 148, 153-158, 188-191, and glutamate 196; these read SSGKGQ and EEFL. Residues 112–302 form the ATP-grasp domain; the sequence is NLAAGELGLR…EFDLHLRAVL (191 aa). 2 residues coordinate Mg(2+): glutamate 261 and glutamate 273. Residues aspartate 280, lysine 350, and 357 to 358 contribute to the N(1)-(5-phospho-beta-D-ribosyl)glycinamide site; that span reads RR.

Belongs to the PurK/PurT family. In terms of assembly, homodimer.

The catalysed reaction is N(1)-(5-phospho-beta-D-ribosyl)glycinamide + formate + ATP = N(2)-formyl-N(1)-(5-phospho-beta-D-ribosyl)glycinamide + ADP + phosphate + H(+). Its pathway is purine metabolism; IMP biosynthesis via de novo pathway; N(2)-formyl-N(1)-(5-phospho-D-ribosyl)glycinamide from N(1)-(5-phospho-D-ribosyl)glycinamide (formate route): step 1/1. Functionally, involved in the de novo purine biosynthesis. Catalyzes the transfer of formate to 5-phospho-ribosyl-glycinamide (GAR), producing 5-phospho-ribosyl-N-formylglycinamide (FGAR). Formate is provided by PurU via hydrolysis of 10-formyl-tetrahydrofolate. The polypeptide is Formate-dependent phosphoribosylglycinamide formyltransferase (Synechococcus sp. (strain CC9311)).